The following is a 57-amino-acid chain: Small ribosomal subunit protein bS21 (57 aa).

This sequence belongs to the bacterial ribosomal protein bS21 family.

In Bacillus pumilus (strain SAFR-032), this protein is Small ribosomal subunit protein bS21.